Reading from the N-terminus, the 596-residue chain is Meiosis-specific protein ASY1 (596 aa).

The HORMA domain maps to 15-228 (QDSLLLTRNL…SKHLVLTLKV (214 aa)). The disordered stretch occupies residues 235 to 303 (CEDENDDMQD…NTQDPAENEQ (69 aa)). Residues 282–295 (QDDDDGEVDEDDNT) are compositionally biased toward acidic residues. The SWIRM domain maps to 351-449 (SKTGKDMYIK…ASSNRRLGKR (99 aa)). The tract at residues 562-596 (TVNCSQASQDRRGRKTSMVREPILQYSKRQKSQAN) is disordered.

As to quaternary structure, interacts with ASY3.

It is found in the chromosome. Its subcellular location is the nucleus. Functionally, required for normal meiosis in male and female gametophytes. Plays a crucial role in coordinating the activity of DMC1, a key member of the homologous recombination machinery. Acts at the interface between the developing chromosome axes and the recombination machinery to ensure DMC1-mediated interhomolog recombination. This Arabidopsis thaliana (Mouse-ear cress) protein is Meiosis-specific protein ASY1.